We begin with the raw amino-acid sequence, 98 residues long: Large ribosomal subunit protein bL28 (98 aa).

Belongs to the bacterial ribosomal protein bL28 family.

This is Large ribosomal subunit protein bL28 from Chelativorans sp. (strain BNC1).